Consider the following 179-residue polypeptide: Large ribosomal subunit protein uL5 (179 aa).

Belongs to the universal ribosomal protein uL5 family. Part of the 50S ribosomal subunit; part of the 5S rRNA/L5/L18/L25 subcomplex. Contacts the 5S rRNA and the P site tRNA. Forms a bridge to the 30S subunit in the 70S ribosome.

Its function is as follows. This is one of the proteins that bind and probably mediate the attachment of the 5S RNA into the large ribosomal subunit, where it forms part of the central protuberance. In the 70S ribosome it contacts protein S13 of the 30S subunit (bridge B1b), connecting the 2 subunits; this bridge is implicated in subunit movement. Contacts the P site tRNA; the 5S rRNA and some of its associated proteins might help stabilize positioning of ribosome-bound tRNAs. The polypeptide is Large ribosomal subunit protein uL5 (Janthinobacterium sp. (strain Marseille) (Minibacterium massiliensis)).